The chain runs to 123 residues: Large ribosomal subunit protein uL14 (123 aa).

It belongs to the universal ribosomal protein uL14 family. In terms of assembly, part of the 50S ribosomal subunit. Forms a cluster with proteins L3 and L19. In the 70S ribosome, L14 and L19 interact and together make contacts with the 16S rRNA in bridges B5 and B8.

Binds to 23S rRNA. Forms part of two intersubunit bridges in the 70S ribosome. The polypeptide is Large ribosomal subunit protein uL14 (Blochmanniella pennsylvanica (strain BPEN)).